The chain runs to 260 residues: Carbonic anhydrase (260 aa).

The segment at 1–31 (MAHAWGYGPADGPESWAESFPIANGPRQSPI) is disordered. The 257-residue stretch at 3–259 (HAWGYGPADG…LKGRKVRASF (257 aa)) folds into the Alpha-carbonic anhydrase domain. Residue histidine 64 is the Proton acceptor of the active site. 3 residues coordinate Zn(2+): histidine 94, histidine 96, and histidine 119. Residue tyrosine 127 is part of the active site. 198-199 (TT) serves as a coordination point for substrate.

It belongs to the alpha-carbonic anhydrase family. Requires Zn(2+) as cofactor.

It catalyses the reaction hydrogencarbonate + H(+) = CO2 + H2O. In terms of biological role, reversible hydration of carbon dioxide. The polypeptide is Carbonic anhydrase (cahz) (Danio rerio (Zebrafish)).